The chain runs to 533 residues: MTKAPVAPVVLVILDGWGYCEETRGNAIAAAKTPVMESLWTAYPHTLIHTSGKAVGLPEGQMGNSEVGHLNIGAGRVVPQELVRISDAVEDGSILSNSALVKICQEVRNRNGKLHLVGLCSEGGVHSHITHLFGLLDLAKEQRISEVCIHAITDGRDTAPTDGINAISALEDYINHVGIGRIVTVSGRYYAMDRDRRWDRVQRAYDVMTQDGVGDGRKAVDVLQASYAEGVNDEFIVPVRIAPGTVEPGDGVIFFNFRPDRSRQLTQAFVSPEFTGFARQQIKPLSFVTFTQYDSDLSVSVAFEPQNLTNILGEVIANQGLNQFRTAETEKYAHVTYFFNGGLEEPFAGEDRELVSSPMVATYDKAPAMSATAVTDTAIAAIQKGIYSLIVINYANPDMVGHTGQIEPTIKAIETVDRCLGRLLEGVSKAGGTTIITADHGNAEYMLDEAGNSWTAHTTNPVPLILVEGEKVKIPGYGTNVELRSDGKLADIAPTILDILQLPQPPEMTGRSLLQPAEYEVELSRTPIPVGLN.

Mn(2+)-binding residues include Asp-15 and Ser-65. Ser-65 acts as the Phosphoserine intermediate in catalysis. Residues His-126, Arg-156–Asp-157, Arg-188, Arg-194, Arg-258–Arg-261, and Lys-331 each bind substrate. The Mn(2+) site is built by Asp-398, His-402, Asp-439, His-440, and His-457.

The protein belongs to the BPG-independent phosphoglycerate mutase family. Monomer. It depends on Mn(2+) as a cofactor.

It carries out the reaction (2R)-2-phosphoglycerate = (2R)-3-phosphoglycerate. It functions in the pathway carbohydrate degradation; glycolysis; pyruvate from D-glyceraldehyde 3-phosphate: step 3/5. Catalyzes the interconversion of 2-phosphoglycerate and 3-phosphoglycerate. In Nostoc sp. (strain PCC 7120 / SAG 25.82 / UTEX 2576), this protein is 2,3-bisphosphoglycerate-independent phosphoglycerate mutase.